Here is a 158-residue protein sequence, read N- to C-terminus: 6,7-dimethyl-8-ribityllumazine synthase (158 aa).

Residues phenylalanine 22, alanine 57–glutamate 59, and alanine 81–isoleucine 83 each bind 5-amino-6-(D-ribitylamino)uracil. Residue glycine 86–threonine 87 coordinates (2S)-2-hydroxy-3-oxobutyl phosphate. The Proton donor role is filled by histidine 89. A 5-amino-6-(D-ribitylamino)uracil-binding site is contributed by phenylalanine 114. Arginine 128 is a (2S)-2-hydroxy-3-oxobutyl phosphate binding site.

It belongs to the DMRL synthase family. As to quaternary structure, forms an icosahedral capsid composed of 60 subunits, arranged as a dodecamer of pentamers.

The enzyme catalyses (2S)-2-hydroxy-3-oxobutyl phosphate + 5-amino-6-(D-ribitylamino)uracil = 6,7-dimethyl-8-(1-D-ribityl)lumazine + phosphate + 2 H2O + H(+). It functions in the pathway cofactor biosynthesis; riboflavin biosynthesis; riboflavin from 2-hydroxy-3-oxobutyl phosphate and 5-amino-6-(D-ribitylamino)uracil: step 1/2. Functionally, catalyzes the formation of 6,7-dimethyl-8-ribityllumazine by condensation of 5-amino-6-(D-ribitylamino)uracil with 3,4-dihydroxy-2-butanone 4-phosphate. This is the penultimate step in the biosynthesis of riboflavin. This chain is 6,7-dimethyl-8-ribityllumazine synthase, found in Shewanella frigidimarina (strain NCIMB 400).